We begin with the raw amino-acid sequence, 447 residues long: Exodeoxyribonuclease 7 large subunit (447 aa).

Belongs to the XseA family. As to quaternary structure, heterooligomer composed of large and small subunits.

It localises to the cytoplasm. The catalysed reaction is Exonucleolytic cleavage in either 5'- to 3'- or 3'- to 5'-direction to yield nucleoside 5'-phosphates.. Functionally, bidirectionally degrades single-stranded DNA into large acid-insoluble oligonucleotides, which are then degraded further into small acid-soluble oligonucleotides. The sequence is that of Exodeoxyribonuclease 7 large subunit from Pediococcus pentosaceus (strain ATCC 25745 / CCUG 21536 / LMG 10740 / 183-1w).